We begin with the raw amino-acid sequence, 231 residues long: MAKLTKRQKAIAAAIEANKVYTLEEAVQVLNNLPAAKFKESLDVSVNLGVDPRKSDQVVRGATTLPAGTGKTVRVAVFAQGAAAEAAKAEGADIVGFDDLAESIQQGNLDFDVVIAAPDAMRVVGKLGTILGPRGLMPNPKVGTVTPDVANAVKNAKAGQARYRVDKAGIIHAAIGQVGFTAEAIRQNVETLVADLKKLKPATSKGVYIKKITLSSTMGPGLTVDVNNVTN.

It belongs to the universal ribosomal protein uL1 family. In terms of assembly, part of the 50S ribosomal subunit.

Its function is as follows. Binds directly to 23S rRNA. The L1 stalk is quite mobile in the ribosome, and is involved in E site tRNA release. In terms of biological role, protein L1 is also a translational repressor protein, it controls the translation of the L11 operon by binding to its mRNA. In Acinetobacter baylyi (strain ATCC 33305 / BD413 / ADP1), this protein is Large ribosomal subunit protein uL1.